A 121-amino-acid chain; its full sequence is Glycine cleavage system H protein (121 aa).

Positions 16-98 constitute a Lipoyl-binding domain; that stretch reads VATVGITAYA…ESGGWFAKIK (83 aa). The residue at position 57 (Lys57) is an N6-lipoyllysine.

This sequence belongs to the GcvH family. In terms of assembly, the glycine cleavage system is composed of four proteins: P, T, L and H. Requires (R)-lipoate as cofactor.

The glycine cleavage system catalyzes the degradation of glycine. The H protein shuttles the methylamine group of glycine from the P protein to the T protein. This is Glycine cleavage system H protein from Caulobacter vibrioides (strain NA1000 / CB15N) (Caulobacter crescentus).